Here is a 345-residue protein sequence, read N- to C-terminus: MPISSALAERIATSPKAELHIHIEGSLEPELMFALAERNGVKLPYASVEEVRAAYAFDDLQSFLDLYYAGASVLLTEQDFYDMTAAYVARALADNVHHAEIFFDPQTHTARNVPMHVVIHGIVRALDDAEREHGFSSALILCFLRHLSEEDAFDTLEAALPYIQDPANRIIGVGLDSSERGNPPEKFARVFARCKELGLRLVAHAGEEGPAQYVIDALDILKVERIDHGVRAIDDAALVKRLAAERIALTVCPLSNEKLKVYPDLRDHSLKQLLDAGCAVTLHSDDPAYFGGYMNTNWLATFNALDLSAADAHALARNSFEASFLPEQDKALWLAKVDDHWKAAH.

Zn(2+) is bound by residues histidine 20, histidine 22, and histidine 204. Glutamate 207 serves as the catalytic Proton donor. Residue aspartate 285 coordinates Zn(2+). Substrate is bound at residue aspartate 286.

It belongs to the metallo-dependent hydrolases superfamily. Adenosine and AMP deaminases family. Adenine deaminase type 2 subfamily. Zn(2+) serves as cofactor.

It catalyses the reaction adenine + H2O + H(+) = hypoxanthine + NH4(+). Catalyzes the hydrolytic deamination of adenine to hypoxanthine. Plays an important role in the purine salvage pathway and in nitrogen catabolism. The sequence is that of Adenine deaminase from Ralstonia pickettii (strain 12J).